The chain runs to 236 residues: Small ribosomal subunit protein uS2c (236 aa).

Belongs to the universal ribosomal protein uS2 family.

It localises to the plastid. In Cuscuta exaltata (Tall dodder), this protein is Small ribosomal subunit protein uS2c (rps2).